We begin with the raw amino-acid sequence, 58 residues long: Preprotein translocase subunit SecG (58 aa).

Topologically, residues 1 to 32 (MAQKKKSSGSGLMSSAGLMTYYDADKKAIHVQ) are cytoplasmic. The helical transmembrane segment at 33 to 54 (PKTVFIFGAICGIVILAFSAGF) threads the bilayer. At 55 to 58 (GLWP) the chain is on the extracellular side.

Belongs to the SEC61-beta family. As to quaternary structure, component of the protein translocase complex. Heterotrimer consisting of alpha (SecY), beta (SecG) and gamma (SecE) subunits. Can form oligomers of the heterotrimer.

The protein resides in the cell membrane. Functionally, involved in protein export. The function of the beta subunit is unknown, but it may be involved in stabilization of the trimeric complex. The protein is Preprotein translocase subunit SecG of Methanococcoides burtonii (strain DSM 6242 / NBRC 107633 / OCM 468 / ACE-M).